The chain runs to 181 residues: Large ribosomal subunit protein uL6m (181 aa).

It belongs to the universal ribosomal protein uL6 family.

It localises to the mitochondrion. This is Large ribosomal subunit protein uL6m (RPL6) from Acanthamoeba castellanii (Amoeba).